A 228-amino-acid chain; its full sequence is Extracellular protease inhibitor 10 (228 aa).

Positions 1–22 are cleaved as a signal peptide; sequence MKSAFTLSLALVAVTATISAAA. 3 consecutive Kazal-like domains span residues 23 to 72, 90 to 127, and 156 to 208; these read DDNC…ECAS, TSGT…AKCK, and GYQG…EGTL. Asn25 is a glycosylation site (N-linked (GlcNAc...) asparagine). 3 disulfide bridges follow: Cys26/Cys56, Cys30/Cys49, and Cys38/Cys70. The segment at 69-92 is disordered; sequence ECASTPASSATPSPVTSSTGSTSG. A compositionally biased stretch (low complexity) spans 71 to 92; the sequence is ASTPASSATPSPVTSSTGSTSG. Disulfide bonds link Cys96/Cys126, Cys100/Cys119, Cys162/Cys193, and Cys167/Cys186. Residue Asn199 is glycosylated (N-linked (GlcNAc...) asparagine).

Interacts with host subtilisin-like protease P69B.

Its subcellular location is the secreted. Functionally, secreted effector that interacts with and inhibits the pathogenesis-related P69B subtilisin-like serine protease of host tomato. Inhibition of host proteases by a pathogen extracellular protease inhibitor forms a specific type of defense-counterdefense mechanism between plants and microbial pathogens. The sequence is that of Extracellular protease inhibitor 10 from Phytophthora infestans (strain T30-4) (Potato late blight agent).